A 116-amino-acid chain; its full sequence is Large ribosomal subunit protein bL19 (116 aa).

This sequence belongs to the bacterial ribosomal protein bL19 family.

In terms of biological role, this protein is located at the 30S-50S ribosomal subunit interface and may play a role in the structure and function of the aminoacyl-tRNA binding site. The protein is Large ribosomal subunit protein bL19 (rplS) of Streptomyces lividans.